A 3073-amino-acid chain; its full sequence is Adhesion G-protein coupled receptor G4 (3073 aa).

Residues 1-25 (MRKHILHQRLCGLILVSSFIFLTDS) form the signal peptide. Residues 26-2691 (LSLKGKRLDF…RSTVDAVNER (2666 aa)) lie on the Extracellular side of the membrane. The 200-residue stretch at 29–228 (KGKRLDFYGE…SPTVDRRLRC (200 aa)) folds into the Pentraxin (PTX) domain. 2 disulfides stabilise this stretch: C58–C123 and C200–C228. N233 carries an N-linked (GlcNAc...) asparagine glycan. The disordered stretch occupies residues 253–272 (SQTTGLNPHKTSHSSTLLPE). N662 carries N-linked (GlcNAc...) asparagine glycosylation. 2 stretches are compositionally biased toward polar residues: residues 671–696 (GNAT…ESKV) and 929–951 (GNSA…SSST). 2 disordered regions span residues 671–697 (GNAT…SKVT) and 924–951 (SEKS…SSST). 3 N-linked (GlcNAc...) asparagine glycosylation sites follow: N1141, N1304, and N1495. Disordered stretches follow at residues 1565-1595 (FTSS…AGPT), 1741-1760 (TLTN…STPT), and 1945-1972 (ITLS…SDSR). Over residues 1945-1954 (ITLSSNPSVN) the composition is skewed to polar residues. A compositionally biased stretch (low complexity) spans 1955–1972 (SRATSPTWSSSSLPSDSR). The GAIN-B domain occupies 2535-2684 (SSEEVIAPQI…GVLMDLSRST (150 aa)). Disulfide bonds link C2635-C2666 and C2654-C2668. Residues 2635–2684 (CAFWDFDTNNGLGGWNPSGCKLKESNINYTICQCNHLTHFGVLMDLSRST) form a GPS region. The tract at residues 2673–2684 (HFGVLMDLSRST) is stachel. Residues 2692 to 2712 (ILVIITYTGCGISSIFLGIAM) traverse the membrane as a helical segment. The Cytoplasmic segment spans residues 2713–2728 (VTYIAFHKLRKDYPSK). Residues 2729-2749 (ILINLCTALLMLNLAFLVNSW) form a helical membrane-spanning segment. Residues 2750 to 2755 (LTSFQK) are Extracellular-facing. A helical membrane pass occupies residues 2756–2776 (VGLCITAAVALHYFLLVSLTW). C2759 and C2836 are oxidised to a cystine. At 2777-2798 (MGLEAVHMYFALVKVFNTYIPN) the chain is on the cytoplasmic side. The chain crosses the membrane as a helical span at residues 2799–2819 (YILKFCLAGWGIPAITVAIIL). At 2820 to 2842 (SVRKDLYGTLSPTTPFCWIKDDH) the chain is on the extracellular side. A helical transmembrane segment spans residues 2843–2863 (IFYISVVAYFCLIFLMNLSMF). At 2864–2892 (CTVLVQLTSVKSQSQKTRKKMILNDLKGT) the chain is on the cytoplasmic side. A helical transmembrane segment spans residues 2893-2913 (ISLTFLLGLTWGFAFFAWGPV). Residue R2914 is a topological domain, extracellular. Residues 2915–2935 (IFFLYLFAICNTLQGFLIFVF) traverse the membrane as a helical segment. The Cytoplasmic portion of the chain corresponds to 2936 to 3073 (YCVMKESVRE…SSGLGEMFNL (138 aa)).

It belongs to the G-protein coupled receptor 2 family. Adhesion G-protein coupled receptor (ADGR) subfamily. As to quaternary structure, homodimer; homodimerizes via its Pentraxin domain in a calcium-independent manner. Heterodimer of 2 chains generated by proteolytic processing; the large extracellular N-terminal fragment and the membrane-bound C-terminal fragment predominantly remain associated and non-covalently linked. Autoproteolytically processed at the GPS region of the GAIN-B domain; this cleavage modulates receptor activity.

The protein resides in the membrane. Its activity is regulated as follows. Forms a heterodimer of 2 chains generated by proteolytic processing that remain associated through non-covalent interactions mediated by the GAIN-B domain. In the inactivated receptor, the Stachel sequence (also named stalk) is embedded in the GAIN-B domain, where it adopts a beta-strand conformation. On activation, the Stachel moves into the 7 transmembrane region and adopts a twisted hook-shaped configuration that forms contacts within the receptor, leading to coupling of a G-alpha protein, which activates signaling. The cleaved GAIN-B and N-terminal domains can then dissociate from the rest of the receptor. Orphan adhesion G-protein coupled receptor (aGPCR). Ligand binding causes a conformation change that triggers signaling via guanine nucleotide-binding proteins (G proteins) and modulates the activity of downstream effectors, such as adenylate cyclase. ADGRG4 is coupled to G(s) G proteins and mediates activation of adenylate cyclase activity. May be act as sensor of mechanical forces. This is Adhesion G-protein coupled receptor G4 from Mus musculus (Mouse).